We begin with the raw amino-acid sequence, 202 residues long: Urease accessory protein UreG (202 aa).

Position 13 to 20 (13 to 20) interacts with GTP; it reads GPVGAGKT.

The protein belongs to the SIMIBI class G3E GTPase family. UreG subfamily. Homodimer. UreD, UreF and UreG form a complex that acts as a GTP-hydrolysis-dependent molecular chaperone, activating the urease apoprotein by helping to assemble the nickel containing metallocenter of UreC. The UreE protein probably delivers the nickel.

It localises to the cytoplasm. Functionally, facilitates the functional incorporation of the urease nickel metallocenter. This process requires GTP hydrolysis, probably effectuated by UreG. This chain is Urease accessory protein UreG, found in Dinoroseobacter shibae (strain DSM 16493 / NCIMB 14021 / DFL 12).